Reading from the N-terminus, the 465-residue chain is Trigger factor (465 aa).

The PPIase FKBP-type domain occupies 163–248 (GDVINFNFKG…INKIKENQPA (86 aa)). The interval 431-465 (EIVNKNQNDNEIEQDKEQKDNNEEKIKQENNLENK) is disordered. Over residues 443-465 (EQDKEQKDNNEEKIKQENNLENK) the composition is skewed to basic and acidic residues.

The protein belongs to the FKBP-type PPIase family. Tig subfamily.

Its subcellular location is the cytoplasm. The enzyme catalyses [protein]-peptidylproline (omega=180) = [protein]-peptidylproline (omega=0). Its function is as follows. Involved in protein export. Acts as a chaperone by maintaining the newly synthesized protein in an open conformation. Functions as a peptidyl-prolyl cis-trans isomerase. The chain is Trigger factor from Mesomycoplasma hyopneumoniae (strain J / ATCC 25934 / NCTC 10110) (Mycoplasma hyopneumoniae).